The sequence spans 319 residues: MESEIASEFLPFCRIYKDGRVERLIGTDTIPASLDPTYDVVSKDVIYSPENNLSVRLFLPHKSTKLTAGNKLPLLIYIHGGAWIIESPFSPLYHNYLTEVVKSANCLAVSVQYRRAPEDPVPAAYEDVWSAIQWIFAHSNGSGPVDWINKHADFGKVFLGGDSAGGNISHHMAMKAGKEKKLDLKIKGIAVVHPAFWGTDPVDEYDVQDKETRSGIAEIWEKIASPNSVNGTDDPLFNVNGSGSDFSGLGCDKVLVAVAGKDVFVRQGLAYAAKLEKCEWEGTVEVVEEEGEDHVFHLQNPKSDKALKFLKKFVEFIIG.

An N-acetylmethionine modification is found at M1. The short motif at 79–81 (HGG) is the Involved in the stabilization of the negatively charged intermediate by the formation of the oxyanion hole element. Active-site residues include S163, D262, and H294.

It belongs to the 'GDXG' lipolytic enzyme family. In terms of tissue distribution, expressed in roots, leaves, stems, flowers and siliques.

It catalyses the reaction a carboxylic ester + H2O = an alcohol + a carboxylate + H(+). Its function is as follows. Carboxylesterase acting on esters with varying acyl chain length. The polypeptide is Probable carboxylesterase 5 (CXE5) (Arabidopsis thaliana (Mouse-ear cress)).